The following is a 373-amino-acid chain: MAAVTYELIKTCKQTGARLGKVHTPHGSFDTPVFMPVGTLATVKGMSPEELKEIDARIILSNTYHCYLRPGQDIVKQAGGLHGFMNWDRPILTDSGGFQVFSLSGLRKITEEGVTFRSHLDGSKHVFTPESVMDIENDLGADIIMAFDECAPYPAEYDYVKKSMERTTRWAKRCKEAHTNTEKQSLFGIIQGGMYKELRIESANQLKELDFPGYAIGGLSVGEPAEIMYEVLDYTAPLMPADKPRYLMGVGTPDYLIEGAIRGIDMFDCVLPTRIGRNGTVLTSNGRVIIRDAKYSRDFSKLDPECDCYVCRNYSRAYIRHLIKCGELLGLRLTTWHNLYFLINLMKQVRQAIMDDKLASFRDEFYLKYGYTK.

The active-site Proton acceptor is aspartate 94. Residues 94–98 (DSGGF), aspartate 148, glutamine 191, and glycine 218 contribute to the substrate site. An RNA binding region spans residues 249-255 (GVGTPDY). Aspartate 268 functions as the Nucleophile in the catalytic mechanism. The tract at residues 273-277 (TRIGR) is RNA binding; important for wobble base 34 recognition. The Zn(2+) site is built by cysteine 306, cysteine 308, cysteine 311, and histidine 337.

It belongs to the queuine tRNA-ribosyltransferase family. In terms of assembly, homodimer. Within each dimer, one monomer is responsible for RNA recognition and catalysis, while the other monomer binds to the replacement base PreQ1. It depends on Zn(2+) as a cofactor.

The catalysed reaction is 7-aminomethyl-7-carbaguanine + guanosine(34) in tRNA = 7-aminomethyl-7-carbaguanosine(34) in tRNA + guanine. It participates in tRNA modification; tRNA-queuosine biosynthesis. Functionally, catalyzes the base-exchange of a guanine (G) residue with the queuine precursor 7-aminomethyl-7-deazaguanine (PreQ1) at position 34 (anticodon wobble position) in tRNAs with GU(N) anticodons (tRNA-Asp, -Asn, -His and -Tyr). Catalysis occurs through a double-displacement mechanism. The nucleophile active site attacks the C1' of nucleotide 34 to detach the guanine base from the RNA, forming a covalent enzyme-RNA intermediate. The proton acceptor active site deprotonates the incoming PreQ1, allowing a nucleophilic attack on the C1' of the ribose to form the product. After dissociation, two additional enzymatic reactions on the tRNA convert PreQ1 to queuine (Q), resulting in the hypermodified nucleoside queuosine (7-(((4,5-cis-dihydroxy-2-cyclopenten-1-yl)amino)methyl)-7-deazaguanosine). The protein is Queuine tRNA-ribosyltransferase of Ruminiclostridium cellulolyticum (strain ATCC 35319 / DSM 5812 / JCM 6584 / H10) (Clostridium cellulolyticum).